The primary structure comprises 988 residues: Voltage-gated delayed rectifier potassium channel KCNH5 (988 aa).

The Cytoplasmic portion of the chain corresponds to 1-217; the sequence is MPGGKRGLVA…LHYCAFKTTW (217 aa). The PAS domain maps to 12–90; sequence QNTFLENIVR…VRQTFDNYES (79 aa). The 53-residue stretch at 91-143 folds into the PAC domain; that stretch reads NCFEVLLYKKNRTPVWFYMQIAPIRNEHEKVVLFLCTFKDITLFKQPIEDDST. The helical transmembrane segment at 218-238 threads the bilayer; the sequence is DWVILILTFYTAIMVPYNVSF. The Extracellular portion of the chain corresponds to 239–243; that stretch reads KTKQN. A helical membrane pass occupies residues 244–264; that stretch reads NIAWLVLDSVVDVIFLVDIVL. The Cytoplasmic portion of the chain corresponds to 265–291; the sequence is NFHTTFVGPGGEVISDPKLIRMNYLKT. Residues 292–312 traverse the membrane as a helical segment; that stretch reads WFVIDLLSCLPYDIINAFENV. At 313 to 319 the chain is on the extracellular side; sequence DEGISSL. The chain crosses the membrane as a helical; Voltage-sensor span at residues 320–340; it reads FSSLKVVRLLRLGRVARKLDH. The Cytoplasmic portion of the chain corresponds to 341–346; sequence YLEYGA. A helical transmembrane segment spans residues 347–367; that stretch reads AVLVLLVCVFGLVAHWLACIW. Residues 368–419 are Extracellular-facing; the sequence is YSIGDYEVIDEVTNTIQIDSWLYQLALSIGTPYRYNTSAGIWEGGPSKDSLY. A glycan (N-linked (GlcNAc...) asparagine) is linked at Asn403. The pore-forming intramembrane region spans 420–440; the sequence is VSSLYFTMTSLTTIGFGNIAP. Positions 432–437 match the Selectivity filter motif; that stretch reads TIGFGN. Residues 441–446 are Extracellular-facing; that stretch reads TTDVEK. A helical transmembrane segment spans residues 447–467; that stretch reads MFSVAMMMVGSLLYATIFGNV. Topologically, residues 468-988 are cytoplasmic; it reads TTIFQQMYAN…PESDKDEIHF (521 aa). 550 to 667 contacts a nucleoside 3',5'-cyclic phosphate; it reads AFRLASDGCL…NSFSRNLTLT (118 aa). The segment at 704–715 is calmodulin-binding; it reads HPVRKLFQKFKQ. Positions 717–742 are disordered; it reads KELRNQGSTQGDPERNQLQVESRSLQ. Residues 721 to 742 show a composition bias toward polar residues; sequence NQGSTQGDPERNQLQVESRSLQ. A Glycyl lysine isopeptide (Lys-Gly) (interchain with G-Cter in ubiquitin) cross-link involves residue Lys785. The disordered stretch occupies residues 838-890; the sequence is GLLSEDPKSSDSENSVTKNPLRKTDSCDSGITKSDLRLDKAGEARSPLEHSPI. Residues 871-885 show a composition bias toward basic and acidic residues; sequence SDLRLDKAGEARSPL. Residue Ser883 is modified to Phosphoserine. The segment at 909–948 is CAD (involved in subunit assembly); that stretch reads TLQEVKHELKEDIQLLSCRMTALEKQVAEILKILSEKSVP. Residues 969-988 are disordered; it reads DIFSVSRPESPESDKDEIHF. A compositionally biased stretch (basic and acidic residues) spans 977–988; sequence ESPESDKDEIHF.

This sequence belongs to the potassium channel family. H (Eag) (TC 1.A.1.20) subfamily. Kv10.2/KCNH5 sub-subfamily. Homotetramer. The potassium channel is probably composed of a homo- or heterotetrameric complex of pore-forming alpha subunits that can associate with modulating beta subunits. Heteromultimer with KCNH1/EAG. In terms of tissue distribution, detected in brain, skeletal muscle, heart, placenta, lung and liver, and at low levels in kidney.

It localises to the membrane. The catalysed reaction is K(+)(in) = K(+)(out). Its function is as follows. Pore-forming (alpha) subunit of a voltage-gated delayed rectifier potassium channel that mediates outward-rectifying potassium currents which, on depolarization, reaches a steady-state level and do not inactivate. The kinetic is characterized by a slow activation time course and a small voltage dependence of the activation time constants, therefore, starts to open at more negative voltages. The activation kinetics depend on the prepulse potential and external divalent cation concentration. The time course of activation is biphasic with a fast and a slowly activating current component. With negative prepulses, the current activation is delayed and slowed down several fold, whereas more positive prepulses speed up activation, therefore the activation rate depends on holding potential. The chain is Voltage-gated delayed rectifier potassium channel KCNH5 from Homo sapiens (Human).